Reading from the N-terminus, the 71-residue chain is Small ribosomal subunit protein bS21 (71 aa).

Residues 40–71 form a disordered region; it reads KPTQERKRKAAAAVKRNIRRTSRDVTKRKRLY. Basic residues predominate over residues 45–71; it reads RKRKAAAAVKRNIRRTSRDVTKRKRLY.

The protein belongs to the bacterial ribosomal protein bS21 family.

In Xylella fastidiosa (strain M23), this protein is Small ribosomal subunit protein bS21.